Consider the following 443-residue polypeptide: MPFIPNTDADRATMLQAVGASTFDDLISNIPEKVRFKGALNLPEALSEMEVLEELNALANANQDTQKVTSFLGGGAYDHFVPSAIGAIISRSEFYTAYTPYQAEVSQGTLQAMYEFQTMVARLTGMDVANASMYDGATALAEAMLLSVAHKNRKEVVLAGKINPNAVAIMQTYGHGQEIHIRQSALENGGADLASVRELVSDKTAAMIVQHPNFFGCLEDVHELQKIAAENNALFIVSADPISLGILEAPGNYGADIVVGEGQGLGNTQSFGGPYLGLFAAKSQLLRKIPGRLSGMTVDKDGNQGFILTLQTREQHIRREKATSNICTNQALNALCACIYMSMMGKEGLTQVASLSIQKAHYLANEIQKLDGFKLKFSRPFFKEFAIELPIPASQAIAKLLEKKIHAGVDLKMAEENGLLIAVTEKRSKAEMNSFVEALKELC.

It belongs to the GcvP family. N-terminal subunit subfamily. As to quaternary structure, the glycine cleavage system is composed of four proteins: P, T, L and H. In this organism, the P 'protein' is a heterodimer of two subunits.

The catalysed reaction is N(6)-[(R)-lipoyl]-L-lysyl-[glycine-cleavage complex H protein] + glycine + H(+) = N(6)-[(R)-S(8)-aminomethyldihydrolipoyl]-L-lysyl-[glycine-cleavage complex H protein] + CO2. In terms of biological role, the glycine cleavage system catalyzes the degradation of glycine. The P protein binds the alpha-amino group of glycine through its pyridoxal phosphate cofactor; CO(2) is released and the remaining methylamine moiety is then transferred to the lipoamide cofactor of the H protein. The polypeptide is Probable glycine dehydrogenase (decarboxylating) subunit 1 (Chloroherpeton thalassium (strain ATCC 35110 / GB-78)).